A 567-amino-acid polypeptide reads, in one-letter code: Urease subunit alpha (567 aa).

The Urease domain maps to 128-567 (GGIDAHVHFI…LPMSQRYFLF (440 aa)). Ni(2+) contacts are provided by H133, H135, and K216. K216 carries the post-translational modification N6-carboxylysine. Residue H218 coordinates substrate. 2 residues coordinate Ni(2+): H245 and H271. H319 (proton donor) is an active-site residue. D359 contributes to the Ni(2+) binding site.

Belongs to the metallo-dependent hydrolases superfamily. Urease alpha subunit family. Heterotrimer of UreA (gamma), UreB (beta) and UreC (alpha) subunits. Three heterotrimers associate to form the active enzyme. Ni cation is required as a cofactor. Post-translationally, carboxylation allows a single lysine to coordinate two nickel ions.

The protein localises to the cytoplasm. The catalysed reaction is urea + 2 H2O + H(+) = hydrogencarbonate + 2 NH4(+). Its pathway is nitrogen metabolism; urea degradation; CO(2) and NH(3) from urea (urease route): step 1/1. This is Urease subunit alpha from Blochmanniella pennsylvanica (strain BPEN).